Here is a 190-residue protein sequence, read N- to C-terminus: Homeobox protein SEBOX (190 aa).

Residues 1 to 11 are compositionally biased toward low complexity; sequence MPSPVDASSAD. Disordered regions lie at residues 1–24 and 82–161; these read MPSP…RKRT and ILSP…VHPS. Residues 19 to 78 constitute a DNA-binding region (homeobox); sequence HRRKRTTFSKGQLLELERAFAAWPYPNISTHEHLAWVTCLPEAKVQVWFQKRWAKIIKNR. Polar residues predominate over residues 89-100; it reads CPQSSCSLPDTL.

The protein belongs to the paired homeobox family.

It is found in the nucleus. Probable transcription factor involved in the control of specification of mesoderm and endoderm. The chain is Homeobox protein SEBOX (SEBOX) from Homo sapiens (Human).